A 305-amino-acid chain; its full sequence is Glycine--tRNA ligase alpha subunit (305 aa).

It belongs to the class-II aminoacyl-tRNA synthetase family. In terms of assembly, tetramer of two alpha and two beta subunits.

The protein resides in the cytoplasm. It catalyses the reaction tRNA(Gly) + glycine + ATP = glycyl-tRNA(Gly) + AMP + diphosphate. The protein is Glycine--tRNA ligase alpha subunit of Streptococcus sanguinis (strain SK36).